A 464-amino-acid chain; its full sequence is Protein FAM90A23 (464 aa).

Disordered stretches follow at residues 1 to 42 (MMAR…DPRL), 69 to 389 (VPAT…HDGA), and 415 to 437 (HSPEKPGAFLAQSPHVSEKSEAP). Basic and acidic residues-rich tracts occupy residues 74–89 (GKKEGKENLKPWKPRA) and 97–114 (NKDKGEKEERPRQQDPQR). The segment covering 180-197 (LASLSPLRKASLSSSSSL) has biased composition (low complexity).

The protein belongs to the FAM90 family.

In Homo sapiens (Human), this protein is Protein FAM90A23.